The primary structure comprises 199 residues: NADH-quinone oxidoreductase subunit C (199 aa).

It belongs to the complex I 30 kDa subunit family. As to quaternary structure, NDH-1 is composed of 14 different subunits. Subunits NuoB, C, D, E, F, and G constitute the peripheral sector of the complex.

The protein resides in the cell inner membrane. The catalysed reaction is a quinone + NADH + 5 H(+)(in) = a quinol + NAD(+) + 4 H(+)(out). Functionally, NDH-1 shuttles electrons from NADH, via FMN and iron-sulfur (Fe-S) centers, to quinones in the respiratory chain. The immediate electron acceptor for the enzyme in this species is believed to be ubiquinone. Couples the redox reaction to proton translocation (for every two electrons transferred, four hydrogen ions are translocated across the cytoplasmic membrane), and thus conserves the redox energy in a proton gradient. This chain is NADH-quinone oxidoreductase subunit C, found in Rhodopseudomonas palustris (strain BisB18).